A 152-amino-acid chain; its full sequence is 2-C-methyl-D-erythritol 2,4-cyclodiphosphate synthase (152 aa).

Positions 8 and 10 each coordinate a divalent metal cation. 4-CDP-2-C-methyl-D-erythritol 2-phosphate-binding positions include 8–10 and 34–35; these read DSH and HS. Position 42 (His42) interacts with a divalent metal cation. 4-CDP-2-C-methyl-D-erythritol 2-phosphate contacts are provided by residues 56–58, 61–65, 100–106, and 131–135; these read DIG, FPDTD, LDRPKLG, and FKTSE.

The protein belongs to the IspF family. As to quaternary structure, homotrimer. A divalent metal cation serves as cofactor.

The enzyme catalyses 4-CDP-2-C-methyl-D-erythritol 2-phosphate = 2-C-methyl-D-erythritol 2,4-cyclic diphosphate + CMP. Its pathway is isoprenoid biosynthesis; isopentenyl diphosphate biosynthesis via DXP pathway; isopentenyl diphosphate from 1-deoxy-D-xylulose 5-phosphate: step 4/6. Its function is as follows. Involved in the biosynthesis of isopentenyl diphosphate (IPP) and dimethylallyl diphosphate (DMAPP), two major building blocks of isoprenoid compounds. Catalyzes the conversion of 4-diphosphocytidyl-2-C-methyl-D-erythritol 2-phosphate (CDP-ME2P) to 2-C-methyl-D-erythritol 2,4-cyclodiphosphate (ME-CPP) with a corresponding release of cytidine 5-monophosphate (CMP). This Thermus thermophilus (strain ATCC 27634 / DSM 579 / HB8) protein is 2-C-methyl-D-erythritol 2,4-cyclodiphosphate synthase.